A 938-amino-acid chain; its full sequence is MTSQSHGAPPVPSSRPPASRVPVSGYDSHDSHSVSSSHSSHSPVTTHHHPAPPPPASRPVRESGVAPVTAPEPIAAPEPIAAPEPIPAPEPIAAPVPEGLKSEHKPVEREHKPVERKPVSSPAEKSIPASSPVHKAAPTPAASHAVPTSQKSAKSTPGSYAGIPSLQLIDGNKEFNPDVSSYFKKVHLDRAGLDYHVVAVFGSQSTGKSTLLNALFGTQFDVMNETARQQTTKGIWMARAQLEAPHSANSAHSQDCSDSGVLVMDVEGTDGRERGEDQDFERKSALFALATSEVLIVNIWEHQIGLYQGANMGLLKTVFEVNLNLFATSQNRSLIMFVIRDHIGATPLANLSTTLKTDMGKLWDSINKPEGLEHAKLEDFFDLQFTALPHKLLQPNEFYADVEQLACRFTVPKDPNYVFKPVYHRNVPLDGWSFYAEQVWDQIEQNKDLDLPTQQILVARFRCDEIAAGALDIFLSLLVKIRDQLSGGAVASAVLGGLMGEARKQTVDEYDSQASRYTPSVYSATLEKLEDRVDNDLGKVYQSYLAQLKRESLEQFNAALESSSALTFGENLSRASKAAHAHFIDNAKQVTAAIGQPNSSHFSYDDTLAALEQELDTLRDHKSKVEIDRLISRSAKRFKSSFHEEFDENLNKPDETVWDRILESFETLLNASIKKIDPNYSPSAPSAFSFGFGSPKTSAEGLKQIQQEAWAVFGAELKELSKEEQVLSRLKNKFKESFRYDANGVPIVWRPGDDIDGAFAKSREQALEIMPLLSTAKLSSGKSIEPTVALEDDEDDDDETAFAVILTPKRQASLIEKFKKQAEGLYLEAKRSTIQSTTQIPLYMYGLLLLLGWNEIMAVLRSPVYFMFLLVAAGAAYVIHTLHLWGPLTHMTNTMIAEATDMAKAKLKQVLNEAPTGETREREAPVGSSRDDVELKDL.

Residues 1 to 159 (MTSQSHGAPP…QKSAKSTPGS (159 aa)) are disordered. Over 1-839 (MTSQSHGAPP…KRSTIQSTTQ (839 aa)) the chain is Cytoplasmic. The segment covering 33 to 45 (SVSSSHSSHSPVT) has biased composition (low complexity). The span at 74 to 94 (IAAPEPIAAPEPIPAPEPIAA) shows a compositional bias: pro residues. The span at 100–118 (LKSEHKPVEREHKPVERKP) shows a compositional bias: basic and acidic residues. Over residues 146–158 (VPTSQKSAKSTPG) the composition is skewed to polar residues. One can recognise a GB1/RHD3-type G domain in the interval 192 to 423 (GLDYHVVAVF…DPNYVFKPVY (232 aa)). A GTP-binding site is contributed by 202-209 (GSQSTGKS). Residues 603–630 (SYDDTLAALEQELDTLRDHKSKVEIDRL) adopt a coiled-coil conformation. The chain crosses the membrane as a helical span at residues 840-860 (IPLYMYGLLLLLGWNEIMAVL). At 861–863 (RSP) the chain is on the lumenal side. A helical transmembrane segment spans residues 864–884 (VYFMFLLVAAGAAYVIHTLHL). Topologically, residues 885-938 (WGPLTHMTNTMIAEATDMAKAKLKQVLNEAPTGETREREAPVGSSRDDVELKDL) are cytoplasmic. Residues 911-938 (LNEAPTGETREREAPVGSSRDDVELKDL) are disordered. Residues 918-938 (ETREREAPVGSSRDDVELKDL) show a composition bias toward basic and acidic residues.

The protein belongs to the TRAFAC class dynamin-like GTPase superfamily. GB1/RHD3 GTPase family. RHD3 subfamily.

Its subcellular location is the endoplasmic reticulum membrane. In terms of biological role, cooperates with the reticulon proteins and tubule-shaping DP1 family proteins to generate and maintain the structure of the tubular endoplasmic reticulum network. Has GTPase activity, which is required for its function in ER organization. This Yarrowia lipolytica (strain CLIB 122 / E 150) (Yeast) protein is Protein SEY1.